Here is a 478-residue protein sequence, read N- to C-terminus: Protein nucleotidyltransferase YdiU (478 aa).

ATP-binding residues include glycine 84, glycine 86, arginine 87, lysine 107, aspartate 119, glycine 120, arginine 170, and arginine 177. Residue aspartate 246 is the Proton acceptor of the active site. Mg(2+) is bound by residues asparagine 247 and aspartate 256. Aspartate 256 contacts ATP.

It belongs to the SELO family. Requires Mg(2+) as cofactor. The cofactor is Mn(2+).

It carries out the reaction L-seryl-[protein] + ATP = 3-O-(5'-adenylyl)-L-seryl-[protein] + diphosphate. The enzyme catalyses L-threonyl-[protein] + ATP = 3-O-(5'-adenylyl)-L-threonyl-[protein] + diphosphate. The catalysed reaction is L-tyrosyl-[protein] + ATP = O-(5'-adenylyl)-L-tyrosyl-[protein] + diphosphate. It catalyses the reaction L-histidyl-[protein] + UTP = N(tele)-(5'-uridylyl)-L-histidyl-[protein] + diphosphate. It carries out the reaction L-seryl-[protein] + UTP = O-(5'-uridylyl)-L-seryl-[protein] + diphosphate. The enzyme catalyses L-tyrosyl-[protein] + UTP = O-(5'-uridylyl)-L-tyrosyl-[protein] + diphosphate. Nucleotidyltransferase involved in the post-translational modification of proteins. It can catalyze the addition of adenosine monophosphate (AMP) or uridine monophosphate (UMP) to a protein, resulting in modifications known as AMPylation and UMPylation. This is Protein nucleotidyltransferase YdiU from Escherichia coli (strain K12 / MC4100 / BW2952).